Consider the following 251-residue polypeptide: 2,3-bisphosphoglycerate-dependent phosphoglycerate mutase (251 aa).

Residues 13–20 (RHGESEWN), 26–27 (TG), R65, 92–95 (ERHY), K103, 119–120 (RR), and 186–187 (GN) contribute to the substrate site. Residue H14 is the Tele-phosphohistidine intermediate of the active site. The Proton donor/acceptor role is filled by E92.

It belongs to the phosphoglycerate mutase family. BPG-dependent PGAM subfamily.

It carries out the reaction (2R)-2-phosphoglycerate = (2R)-3-phosphoglycerate. Its pathway is carbohydrate degradation; glycolysis; pyruvate from D-glyceraldehyde 3-phosphate: step 3/5. Catalyzes the interconversion of 2-phosphoglycerate and 3-phosphoglycerate. The protein is 2,3-bisphosphoglycerate-dependent phosphoglycerate mutase of Rhodococcus jostii (strain RHA1).